Consider the following 372-residue polypeptide: Probable L-tyrosine/L-aspartate decarboxylase (372 aa).

Lysine 215 carries the post-translational modification N6-(pyridoxal phosphate)lysine.

Belongs to the group II decarboxylase family. MfnA subfamily. The cofactor is pyridoxal 5'-phosphate.

It catalyses the reaction L-tyrosine + H(+) = tyramine + CO2. The catalysed reaction is L-aspartate + H(+) = beta-alanine + CO2. It participates in cofactor biosynthesis; methanofuran biosynthesis. Its pathway is cofactor biosynthesis; coenzyme A biosynthesis. Its function is as follows. Catalyzes the decarboxylation of L-tyrosine to produce tyramine for methanofuran biosynthesis. Can also catalyze the decarboxylation of L-aspartate to produce beta-alanine for coenzyme A (CoA) biosynthesis. This Methanopyrus kandleri (strain AV19 / DSM 6324 / JCM 9639 / NBRC 100938) protein is Probable L-tyrosine/L-aspartate decarboxylase.